The primary structure comprises 158 residues: SsrA-binding protein (158 aa).

Belongs to the SmpB family.

It is found in the cytoplasm. In terms of biological role, required for rescue of stalled ribosomes mediated by trans-translation. Binds to transfer-messenger RNA (tmRNA), required for stable association of tmRNA with ribosomes. tmRNA and SmpB together mimic tRNA shape, replacing the anticodon stem-loop with SmpB. tmRNA is encoded by the ssrA gene; the 2 termini fold to resemble tRNA(Ala) and it encodes a 'tag peptide', a short internal open reading frame. During trans-translation Ala-aminoacylated tmRNA acts like a tRNA, entering the A-site of stalled ribosomes, displacing the stalled mRNA. The ribosome then switches to translate the ORF on the tmRNA; the nascent peptide is terminated with the 'tag peptide' encoded by the tmRNA and targeted for degradation. The ribosome is freed to recommence translation, which seems to be the essential function of trans-translation. The protein is SsrA-binding protein of Parafrankia sp. (strain EAN1pec).